Consider the following 305-residue polypeptide: FMRFamide-related peptides type HF-4 (305 aa).

The first 19 residues, 1-19 (MTSLCLTIAPAVLSLICLS), serve as a signal peptide directing secretion. Phenylalanine 36, phenylalanine 47, and phenylalanine 66 each carry phenylalanine amide. Isoleucine 75 is modified (isoleucine amide). Phenylalanine amide is present on residues phenylalanine 84 and phenylalanine 93. Isoleucine 102 is modified (isoleucine amide). Phenylalanine amide is present on residues phenylalanine 111, phenylalanine 120, phenylalanine 129, phenylalanine 138, phenylalanine 147, phenylalanine 156, and phenylalanine 165. The propeptide occupies 168–305 (SVDGEIEAGV…EHKQEYMRFG (138 aa)).

This sequence belongs to the FARP (FMRFamide related peptide) family. Central nervous system.

It is found in the secreted. Functionally, can function as both cardioregulatory hormones and transmitters and may regulate cardiovascular function. The chain is FMRFamide-related peptides type HF-4 from Cornu aspersum (Brown garden snail).